The sequence spans 626 residues: Chaperone protein HtpG (626 aa).

The tract at residues 1-331 (MSETVERHEF…TDDLPLNVSR (331 aa)) is a; substrate-binding. The tract at residues 332 to 544 (EMLQSTPTLQ…GMGPDLQMQR (213 aa)) is b. The c stretch occupies residues 545-626 (LLRRAGRGFG…GTVAKPAESA (82 aa)).

It belongs to the heat shock protein 90 family. As to quaternary structure, homodimer.

The protein resides in the cytoplasm. Functionally, molecular chaperone. Has ATPase activity. The polypeptide is Chaperone protein HtpG (Methylorubrum populi (strain ATCC BAA-705 / NCIMB 13946 / BJ001) (Methylobacterium populi)).